Reading from the N-terminus, the 729-residue chain is Fatty acid oxidation complex subunit alpha (729 aa).

Positions 1–189 (MLYKGDTLYL…KIGLVDGVVK (189 aa)) are enoyl-CoA hydratase/isomerase. Asp-296 provides a ligand contact to substrate. The segment at 311–729 (ETPKQAAVLG…ARPVGDLKTA (419 aa)) is 3-hydroxyacyl-CoA dehydrogenase. Residues Met-324, Asp-343, 400–402 (VVE), Lys-407, and Ser-429 each bind NAD(+). His-450 serves as the catalytic For 3-hydroxyacyl-CoA dehydrogenase activity. Asn-453 provides a ligand contact to NAD(+). Substrate is bound by residues Asn-500 and Tyr-660. The interval 708-729 (RHNEPYYPPVEPARPVGDLKTA) is disordered.

This sequence in the N-terminal section; belongs to the enoyl-CoA hydratase/isomerase family. It in the C-terminal section; belongs to the 3-hydroxyacyl-CoA dehydrogenase family. In terms of assembly, heterotetramer of two alpha chains (FadB) and two beta chains (FadA).

It catalyses the reaction a (3S)-3-hydroxyacyl-CoA + NAD(+) = a 3-oxoacyl-CoA + NADH + H(+). The enzyme catalyses a (3S)-3-hydroxyacyl-CoA = a (2E)-enoyl-CoA + H2O. The catalysed reaction is a 4-saturated-(3S)-3-hydroxyacyl-CoA = a (3E)-enoyl-CoA + H2O. It carries out the reaction (3S)-3-hydroxybutanoyl-CoA = (3R)-3-hydroxybutanoyl-CoA. It catalyses the reaction a (3Z)-enoyl-CoA = a 4-saturated (2E)-enoyl-CoA. The enzyme catalyses a (3E)-enoyl-CoA = a 4-saturated (2E)-enoyl-CoA. The protein operates within lipid metabolism; fatty acid beta-oxidation. In terms of biological role, involved in the aerobic and anaerobic degradation of long-chain fatty acids via beta-oxidation cycle. Catalyzes the formation of 3-oxoacyl-CoA from enoyl-CoA via L-3-hydroxyacyl-CoA. It can also use D-3-hydroxyacyl-CoA and cis-3-enoyl-CoA as substrate. In Escherichia coli (strain SMS-3-5 / SECEC), this protein is Fatty acid oxidation complex subunit alpha.